The sequence spans 597 residues: ATP-dependent lipid A-core flippase (597 aa).

The next 6 membrane-spanning stretches (helical) occupy residues 26 to 46, 65 to 85, 144 to 164, 166 to 186, 250 to 270, and 276 to 296; these read WIFAASIITMAIYAATETGLA, IQIIPLLLIGLFVIRGGANFI, ILTIIRDSLTILGLLAWMAYL, GLLTLIILVTAPLIALIIWWV, AISQPVVQLIAVLGLAGVIHL, and MLAQISVGTFISFITAMMLLL. Residues 29–311 form the ABC transmembrane type-1 domain; it reads AASIITMAIY…LTKINGTLQR (283 aa). The ABC transporter domain occupies 343 to 579; that stretch reads IRFEHLSFCY…ESHYAGLYRL (237 aa). Residue 377 to 384 coordinates ATP; that stretch reads GHSGSGKS.

The protein belongs to the ABC transporter superfamily. Lipid exporter (TC 3.A.1.106) family. Homodimer.

The protein resides in the cell inner membrane. It carries out the reaction ATP + H2O + lipid A-core oligosaccharideSide 1 = ADP + phosphate + lipid A-core oligosaccharideSide 2.. Involved in lipopolysaccharide (LPS) biosynthesis. Translocates lipid A-core from the inner to the outer leaflet of the inner membrane. Transmembrane domains (TMD) form a pore in the inner membrane and the ATP-binding domain (NBD) is responsible for energy generation. This is ATP-dependent lipid A-core flippase from Nitrosococcus oceani (strain ATCC 19707 / BCRC 17464 / JCM 30415 / NCIMB 11848 / C-107).